Consider the following 115-residue polypeptide: NADH-ubiquinone oxidoreductase chain 3 (115 aa).

Met-1 is subject to N-formylmethionine. Helical transmembrane passes span 3-23 (LMLALLTNFTLATLLVIIAFW), 55-75 (FFLVAITFLLFDLEIALLLPL), and 84-104 (LNTMLTMALFLIILLAVSLAY).

Core subunit of respiratory chain NADH dehydrogenase (Complex I) which is composed of 45 different subunits. Interacts with TMEM186. Interacts with TMEM242.

The protein resides in the mitochondrion inner membrane. The enzyme catalyses a ubiquinone + NADH + 5 H(+)(in) = a ubiquinol + NAD(+) + 4 H(+)(out). In terms of biological role, core subunit of the mitochondrial membrane respiratory chain NADH dehydrogenase (Complex I) which catalyzes electron transfer from NADH through the respiratory chain, using ubiquinone as an electron acceptor. Essential for the catalytic activity of complex I. The protein is NADH-ubiquinone oxidoreductase chain 3 of Bos taurus (Bovine).